A 482-amino-acid chain; its full sequence is E3 ubiquitin-protein ligase parkin (482 aa).

Residues 30–99 (LSIYVKTNTG…LGQQSVLHAI (70 aa)) form the Ubiquitin-like domain. A Phosphoserine; by Pink1 modification is found at serine 94. The RING-type 0; atypical zinc finger occupies 157 to 246 (AHFFVHCSQC…SGGEKDFAAP (90 aa)). Residues cysteine 163, cysteine 166, cysteine 178, and cysteine 181 each contribute to the Zn(2+) site. Threonine 187 bears the Phosphothreonine; by Pink1 mark. 21 residues coordinate Zn(2+): cysteine 208, cysteine 232, histidine 235, cysteine 259, cysteine 262, cysteine 274, histidine 278, cysteine 281, cysteine 284, cysteine 310, cysteine 314, cysteine 353, cysteine 358, cysteine 373, cysteine 377, cysteine 382, cysteine 385, histidine 390, cysteine 394, cysteine 436, and cysteine 439. The TRIAD supradomain stretch occupies residues 255-482 (KNVPCLACTD…RDCMGAHWFG (228 aa)). The RING-type 1 zinc finger occupies 259–314 (CLACTDVSDTVLVFPCASQHVTCIDCFRHYCRSRLGERQFMPHPDFGYTLPCPAGC). IBR-type zinc fingers lie at residues 334–394 (DRYQ…IGEC) and 432–473 (STKP…EWTR). Residues 436-467 (CPKCRTPTERDGGCMHMVCTRAGCGFEWCWVC) form an RING-type 2; atypical zinc finger. Cysteine 449 is a catalytic residue. Zn(2+) is bound by residues cysteine 454, cysteine 459, cysteine 464, cysteine 467, cysteine 475, and histidine 479.

The protein belongs to the RBR family. Parkin subfamily. As to quaternary structure, forms an E3 ubiquitin ligase complex with E2 ubiquitin-conjugating enzymes. Interacts with Pink1. Interacts with Marf. Interacts with Paris. Interacts with septins Septin1 and pnut. In terms of processing, auto-ubiquitinates in an E2-dependent manner leading to its own degradation. Phosphorylated. Activation requires phosphorylation at Ser-94 by Pink1 and binding to Pink1-phosphorylated polyubiquitin chains. Phosphorylation at Thr-187 by Pink1 is also important for mitochondrial localization. As to expression, in oocytes, accumulates in early egg chambers where it is enriched until stages 9-10, localizing mainly to the posterior pole and anterior margin (at protein level). After stage 10 it is no longer detected in the oocyte (at protein level). In embryos, ubiquitously expressed in the early stages (stages 2 to 5) (at protein level). Expression levels decrease at later stages and becomes restricted to the brain and nerve cord from stage 9 (at protein level). Relatively higher levels of expression in the head compared to the body. Enriched in the dorsomedial (DM) dopaminergic neurons.

Its subcellular location is the mitochondrion. The protein localises to the cytoplasm. It is found in the cytosol. It catalyses the reaction [E2 ubiquitin-conjugating enzyme]-S-ubiquitinyl-L-cysteine + [acceptor protein]-L-lysine = [E2 ubiquitin-conjugating enzyme]-L-cysteine + [acceptor protein]-N(6)-ubiquitinyl-L-lysine.. It functions in the pathway protein modification; protein ubiquitination. In the autoinhibited state the side chain of Phe-481 inserts into a hydrophobic groove in RING-0, occluding the ubiquitin acceptor site Cys-449, whereas the REP repressor element binds RING-1 and blocks its E2-binding site. Activation of park requires 2 steps: (1) phosphorylation at Ser-94 by Pink1 and (2) binding to phosphorylated ubiquitin, leading to unlock repression of the catalytic Cys-449 by the RING-0 region via an allosteric mechanism and converting park to its fully-active form. According to another report, phosphorylation at Ser-94 by Pink1 is not essential for activation and only binding to phosphorylated ubiquitin is essential to unlock repression. Its function is as follows. E3 ubiquitin-protein ligase which accepts ubiquitin from E2 ubiquitin-conjugating enzymes in the form of a thioester and then directly transfers the ubiquitin to targeted substrates, such as Paris, Marf, Opa1, Miro, pnut, Septin1, Tom20 and porin. Mediates monoubiquitination as well as 'Lys-6', 'Lys-11', 'Lys-48'-linked and 'Lys-63'-linked polyubiquitination of substrates, depending on the context. Protects against mitochondrial dysfunction during cellular stress, by acting downstream of Pink1, to coordinate mitochondrial quality control mechanisms that remove and replace dysfunctional mitochondrial components. Depending on the severity of mitochondrial damage and/or dysfunction, activity ranges from preventing apoptosis and stimulating mitochondrial biogenesis to regulating mitochondrial dynamics and eliminating severely damaged mitochondria via mitophagy. Appears to be particularly important in maintaining the physiology and function of cells with high energy demands that are undergoing stress or altered metabolic environment, including spermatids, muscle cells and neurons such as the dopaminergic (DA) neurons. Activation and recruitment onto the outer membrane of damaged/dysfunctional mitochondria (OMM) requires Pink1-mediated phosphorylation of both park and ubiquitin. In depolarized mitochondria, mediates the decision between mitophagy or preventing apoptosis by inducing either the poly- or monoubiquitination of porin/VDAC; polyubiquitination of porin promotes mitophagy, while monoubiquitination of porin decreases mitochondrial calcium influx which ultimately inhibits apoptosis. When cellular stress results in irreversible mitochondrial damage, promotes the autophagic degradation of dysfunctional depolarized mitochondria (mitophagy) by promoting the ubiquitination of mitochondrial proteins. Preferentially assembles 'Lys-6'-, 'Lys-11'- and 'Lys-63'-linked polyubiquitin chains following mitochondrial damage, leading to mitophagy. In developing tissues, inhibits JNK-mediated apoptosis by negatively regulating bsk transcription. The Pink1-park pathway also promotes fission and/or inhibits fusion of damaged mitochondria by mediating the ubiquitination and subsequent degradation of proteins involved in mitochondrial fusion/fission such as Marf, Opa1 and fzo. This prevents the refusion of unhealthy mitochondria with the healthy mitochondrial network and/or initiates mitochondrial fragmentation facilitating their later engulfment by autophagosomes. Regulates motility of damaged mitochondria by phosphorylating Miro which likely promotes its park-dependent degradation by the proteasome; in motor neurons, this inhibits mitochondrial intracellular anterograde transport along the axons which probably increases the chance of the mitochondria being eliminated in the soma. The Pink1-park pathway is also involved in mitochondrial regeneration processes such as promoting mitochondrial biogenesis, activating localized mitochondrial repair, promoting selective turnover of mitochondrial proteins and initiating the mitochondrial import of endogenous proteins. Involved in mitochondrial biogenesis via the ubiquitination of transcriptional repressor Paris which leads to its subsequent proteasomal degradation and allows activation of the transcription factor srl. Promotes localized mitochondrial repair by activating the translation of specific nuclear-encoded mitochondrial RNAs (nc-mtRNAs) on the mitochondrial surface, including several key electron transport chain component nc-mtRNAs. This is E3 ubiquitin-protein ligase parkin from Drosophila melanogaster (Fruit fly).